The sequence spans 226 residues: Elongation factor 1-delta 2 (226 aa).

A disordered region spans residues 82-131 (TACSVSPTADQKAPAADEEDDDDVDLFGEETEEEKKAAEERAAAVKASGK). A compositionally biased stretch (acidic residues) spans 97-113 (ADEEDDDDVDLFGEETE). Positions 114–124 (EEKKAAEERAA) are enriched in basic and acidic residues.

The protein belongs to the EF-1-beta/EF-1-delta family. EF-1 is composed of 4 subunits: alpha, beta (1B-alpha=beta'), delta (1B-beta), and gamma (1B-gamma).

In terms of biological role, EF-1-beta and EF-1-beta' stimulate the exchange of GDP bound to EF-1-alpha to GTP. This Oryza sativa subsp. japonica (Rice) protein is Elongation factor 1-delta 2.